Here is a 293-residue protein sequence, read N- to C-terminus: MQFAKGHGTQNDFVLLPDLDARLALTPAVVSALCDRRRGLGADGVLRVTTAKAALSAGVFERLPEGVGAGDWYMDYRNADGSIAQMCGNGVRVFAHYLRAADLESRDEFVVGSLAGPRPVVLHGFDLAHRSRAEVTVEMGKVNLLGSGSAVVGGRRFTGLGIDVGNPHLACVDTTLTEAELAALDVAAPVDFDPAQFPDGVNVEVLTALRDGAVSMRVHERGVGETRSCGTGTVAAAVAALAQEGAAVGTLDVRIPGGVVTVSVTDTTSFLRGPSELVATGELAGEWWQSHQR.

Substrate is bound by residues asparagine 11 and asparagine 78. Cysteine 87 acts as the Proton donor in catalysis. Residues 88-89 (GN), asparagine 166, asparagine 202, and 220-221 (ER) contribute to the substrate site. Cysteine 229 (proton acceptor) is an active-site residue. Substrate is bound at residue 230-231 (GT).

The protein belongs to the diaminopimelate epimerase family. As to quaternary structure, homodimer.

The protein localises to the cytoplasm. The catalysed reaction is (2S,6S)-2,6-diaminopimelate = meso-2,6-diaminopimelate. Its pathway is amino-acid biosynthesis; L-lysine biosynthesis via DAP pathway; DL-2,6-diaminopimelate from LL-2,6-diaminopimelate: step 1/1. Functionally, catalyzes the stereoinversion of LL-2,6-diaminopimelate (L,L-DAP) to meso-diaminopimelate (meso-DAP), a precursor of L-lysine and an essential component of the bacterial peptidoglycan. The chain is Diaminopimelate epimerase from Mycobacterium sp. (strain JLS).